The primary structure comprises 495 residues: 3-octaprenyl-4-hydroxybenzoate carboxy-lyase (495 aa).

Residue Asn172 participates in Mn(2+) binding. Prenylated FMN contacts are provided by residues 175 to 177 (IYR), 189 to 191 (RWL), and 194 to 195 (RG). Mn(2+) is bound at residue Glu238. Asp287 functions as the Proton donor in the catalytic mechanism.

Belongs to the UbiD family. As to quaternary structure, homohexamer. Requires prenylated FMN as cofactor. The cofactor is Mn(2+).

The protein localises to the cell membrane. It carries out the reaction a 4-hydroxy-3-(all-trans-polyprenyl)benzoate + H(+) = a 2-(all-trans-polyprenyl)phenol + CO2. It participates in cofactor biosynthesis; ubiquinone biosynthesis. Functionally, catalyzes the decarboxylation of 3-octaprenyl-4-hydroxy benzoate to 2-octaprenylphenol, an intermediate step in ubiquinone biosynthesis. The chain is 3-octaprenyl-4-hydroxybenzoate carboxy-lyase from Yersinia enterocolitica serotype O:8 / biotype 1B (strain NCTC 13174 / 8081).